Consider the following 103-residue polypeptide: Co-chaperonin GroES (103 aa).

Belongs to the GroES chaperonin family. Heptamer of 7 subunits arranged in a ring. Interacts with the chaperonin GroEL.

Its subcellular location is the cytoplasm. Functionally, together with the chaperonin GroEL, plays an essential role in assisting protein folding. The GroEL-GroES system forms a nano-cage that allows encapsulation of the non-native substrate proteins and provides a physical environment optimized to promote and accelerate protein folding. GroES binds to the apical surface of the GroEL ring, thereby capping the opening of the GroEL channel. This chain is Co-chaperonin GroES, found in Trichodesmium erythraeum (strain IMS101).